A 968-amino-acid polypeptide reads, in one-letter code: RNA polymerase-associated protein RapA (968 aa).

Residues 164–334 (DVGRRHAPRV…FARLRLLDPN (171 aa)) form the Helicase ATP-binding domain. Residue 177–184 (DEVGLGKT) participates in ATP binding. The short motif at 280–283 (DEAH) is the DEAH box element. In terms of domain architecture, Helicase C-terminal spans 490 to 644 (RVEWLMGYLT…TCPTGRTIYD (155 aa)).

The protein belongs to the SNF2/RAD54 helicase family. RapA subfamily. In terms of assembly, interacts with the RNAP. Has a higher affinity for the core RNAP than for the holoenzyme. Its ATPase activity is stimulated by binding to RNAP.

Its function is as follows. Transcription regulator that activates transcription by stimulating RNA polymerase (RNAP) recycling in case of stress conditions such as supercoiled DNA or high salt concentrations. Probably acts by releasing the RNAP, when it is trapped or immobilized on tightly supercoiled DNA. Does not activate transcription on linear DNA. Probably not involved in DNA repair. The polypeptide is RNA polymerase-associated protein RapA (Enterobacter sp. (strain 638)).